Here is a 509-residue protein sequence, read N- to C-terminus: Probable cytochrome P450 513A1 (509 aa).

The helical transmembrane segment at asparagine 2–glutamine 19 threads the bilayer. Cysteine 454 contributes to the heme binding site.

The protein belongs to the cytochrome P450 family. Heme is required as a cofactor.

It is found in the membrane. This chain is Probable cytochrome P450 513A1 (cyp513A1), found in Dictyostelium discoideum (Social amoeba).